The following is a 148-amino-acid chain: MKVILLEPLENLGDVGQVVDVKPGYARNYLLPRGLAVLATESNLKALEARIRAQAKRLAERKAEAERLKKILENLTLTIPVRAGETKIYGSVTAKDIAEALSRQHGVTIDPKRLALEKPIKELGEYVLTYKPHPEVPIQLKVSVVAQE.

It belongs to the bacterial ribosomal protein bL9 family.

In terms of biological role, binds to the 23S rRNA. This chain is Large ribosomal subunit protein bL9, found in Thermus thermophilus.